The following is a 200-amino-acid chain: Ribonuclease HII (200 aa).

The region spanning 6 to 200 (ESIAGVDEVG…KLFAVHGSLT (195 aa)) is the RNase H type-2 domain. A divalent metal cation-binding residues include D12, E13, and D108.

Belongs to the RNase HII family. Requires Mn(2+) as cofactor. The cofactor is Mg(2+).

It localises to the cytoplasm. The catalysed reaction is Endonucleolytic cleavage to 5'-phosphomonoester.. Endonuclease that specifically degrades the RNA of RNA-DNA hybrids. This is Ribonuclease HII from Prochlorococcus marinus (strain MIT 9303).